The primary structure comprises 179 residues: Nucleoside-triphosphatase THEP1 (179 aa).

ATP contacts are provided by residues 7–14 (GMPGVGKT) and 98–105 (IIIIDEIG).

Belongs to the THEP1 NTPase family.

The enzyme catalyses a ribonucleoside 5'-triphosphate + H2O = a ribonucleoside 5'-diphosphate + phosphate + H(+). Functionally, has nucleotide phosphatase activity towards ATP, GTP, CTP, TTP and UTP. May hydrolyze nucleoside diphosphates with lower efficiency. The sequence is that of Nucleoside-triphosphatase THEP1 from Pyrococcus abyssi (strain GE5 / Orsay).